A 72-amino-acid chain; its full sequence is Translation initiation factor IF-1 (72 aa).

Residues 1–72 (MSKTDVVEIE…TKGRIIWRDK (72 aa)) enclose the S1-like domain.

This sequence belongs to the IF-1 family. In terms of assembly, component of the 30S ribosomal translation pre-initiation complex which assembles on the 30S ribosome in the order IF-2 and IF-3, IF-1 and N-formylmethionyl-tRNA(fMet); mRNA recruitment can occur at any time during PIC assembly.

The protein localises to the cytoplasm. In terms of biological role, one of the essential components for the initiation of protein synthesis. Stabilizes the binding of IF-2 and IF-3 on the 30S subunit to which N-formylmethionyl-tRNA(fMet) subsequently binds. Helps modulate mRNA selection, yielding the 30S pre-initiation complex (PIC). Upon addition of the 50S ribosomal subunit IF-1, IF-2 and IF-3 are released leaving the mature 70S translation initiation complex. The polypeptide is Translation initiation factor IF-1 (Lachnoclostridium phytofermentans (strain ATCC 700394 / DSM 18823 / ISDg) (Clostridium phytofermentans)).